Reading from the N-terminus, the 207-residue chain is Large ribosomal subunit protein uL4 (207 aa).

The protein belongs to the universal ribosomal protein uL4 family. In terms of assembly, part of the 50S ribosomal subunit.

Functionally, one of the primary rRNA binding proteins, this protein initially binds near the 5'-end of the 23S rRNA. It is important during the early stages of 50S assembly. It makes multiple contacts with different domains of the 23S rRNA in the assembled 50S subunit and ribosome. Its function is as follows. Forms part of the polypeptide exit tunnel. This Erythrobacter litoralis (strain HTCC2594) protein is Large ribosomal subunit protein uL4.